Reading from the N-terminus, the 139-residue chain is MKKGTVLNSDISSVISRLGHTDTLVVCDAGLPIPKSTTRIDMALTQGVPSFMQVLGVVTNEMQVEAVIIAEEIKQHNPQLHETLLTHLEQLQKHQGNTIEIRYTTHEQFKQQTAESQAVIRSGECSPYANIILCAGVTF.

H20 (proton donor) is an active-site residue. Residues D28, H106, and 128 to 130 (YAN) each bind substrate.

Belongs to the RbsD / FucU family. RbsD subfamily. Homodecamer.

It is found in the cytoplasm. The enzyme catalyses beta-D-ribopyranose = beta-D-ribofuranose. It functions in the pathway carbohydrate metabolism; D-ribose degradation; D-ribose 5-phosphate from beta-D-ribopyranose: step 1/2. In terms of biological role, catalyzes the interconversion of beta-pyran and beta-furan forms of D-ribose. This chain is D-ribose pyranase, found in Escherichia coli O6:H1 (strain CFT073 / ATCC 700928 / UPEC).